The chain runs to 183 residues: uncharacterized protein (183 aa).

This sequence belongs to the asfivirus S183L family.

This is an uncharacterized protein from African swine fever virus (isolate Warthog/Namibia/Wart80/1980) (ASFV).